The chain runs to 470 residues: 3-isopropylmalate dehydratase large subunit (470 aa).

Positions 294 to 307 (PDQNTGISGSTPNP) are enriched in polar residues. The segment at 294–313 (PDQNTGISGSTPNPSDAADD) is disordered. Residues Cys347, Cys407, and Cys410 each contribute to the [4Fe-4S] cluster site.

The protein belongs to the aconitase/IPM isomerase family. LeuC type 1 subfamily. In terms of assembly, heterodimer of LeuC and LeuD. The cofactor is [4Fe-4S] cluster.

The enzyme catalyses (2R,3S)-3-isopropylmalate = (2S)-2-isopropylmalate. The protein operates within amino-acid biosynthesis; L-leucine biosynthesis; L-leucine from 3-methyl-2-oxobutanoate: step 2/4. Catalyzes the isomerization between 2-isopropylmalate and 3-isopropylmalate, via the formation of 2-isopropylmaleate. In Akkermansia muciniphila (strain ATCC BAA-835 / DSM 22959 / JCM 33894 / BCRC 81048 / CCUG 64013 / CIP 107961 / Muc), this protein is 3-isopropylmalate dehydratase large subunit.